The primary structure comprises 220 residues: tRNA (guanine-N(7)-)-methyltransferase (220 aa).

Positions 42, 67, and 122 each coordinate S-adenosyl-L-methionine. Residue D122 is part of the active site. Substrate contacts are provided by residues K126, D158, and 198–201; that span reads TEYE.

It belongs to the class I-like SAM-binding methyltransferase superfamily. TrmB family.

The catalysed reaction is guanosine(46) in tRNA + S-adenosyl-L-methionine = N(7)-methylguanosine(46) in tRNA + S-adenosyl-L-homocysteine. The protein operates within tRNA modification; N(7)-methylguanine-tRNA biosynthesis. In terms of biological role, catalyzes the formation of N(7)-methylguanine at position 46 (m7G46) in tRNA. The chain is tRNA (guanine-N(7)-)-methyltransferase from Mycoplasma capricolum subsp. capricolum (strain California kid / ATCC 27343 / NCTC 10154).